Reading from the N-terminus, the 590-residue chain is Probable indole-3-acetic acid-amido synthetase GH3.1 (590 aa).

This sequence belongs to the IAA-amido conjugating enzyme family.

In terms of biological role, catalyzes the synthesis of indole-3-acetic acid (IAA)-amino acid conjugates, providing a mechanism for the plant to cope with the presence of excess auxin. In Arabidopsis thaliana (Mouse-ear cress), this protein is Probable indole-3-acetic acid-amido synthetase GH3.1 (GH3.1).